The following is a 509-amino-acid chain: Anaerobic nitric oxide reductase transcription regulator NorR (509 aa).

Aspartate 56 is modified (4-aspartylphosphate). In terms of domain architecture, Sigma-54 factor interaction spans 186–415; that stretch reads MIGRSPAMDR…LEHAIHRAAV (230 aa). Residues 214–221 and 277–286 each bind ATP; these read GETGVGKE and ADKGTLFLDE. A DNA-binding region (H-T-H motif) is located at residues 484–503; that stretch reads WAATARALEMDGGNLHRLAR.

The protein operates within nitrogen metabolism; nitric oxide reduction. Its function is as follows. Required for the expression of anaerobic nitric oxide (NO) reductase, acts as a transcriptional activator for at least the norVW operon. Activation also requires sigma-54. The protein is Anaerobic nitric oxide reductase transcription regulator NorR of Aeromonas salmonicida (strain A449).